The following is a 418-amino-acid chain: Secreted beta-glucosidase SUN41 (418 aa).

A signal peptide spans 1 to 23; the sequence is MRFSQATVLAFAALSLAAPAFEA. A compositionally biased stretch (low complexity) spans 81–97; that stretch reads SEETSSTSTSISSTTTI. A disordered region spans residues 81 to 150; sequence SEETSSTSTS…SGSTNGIEGD (70 aa). Asn100 carries an N-linked (GlcNAc...) asparagine glycan. The segment covering 112–126 has biased composition (polar residues); it reads SLPSGTIKPSSFATE. The segment covering 127 to 136 has biased composition (low complexity); sequence SQSQSQSSST.

It belongs to the SUN family. Post-translationally, predicted to be a substrate for cleavage by KEX2.

The protein resides in the secreted. It localises to the cell wall. Cell surface beta-glucosidase involved in cytokinesis, cell wall biogenesis, adhesion to host tissue, and biofilm formation; thus playing an important role in the host-pathogen interaction. Has hydrolytic activity on linear (1-&gt;3)-beta-D-glucans such as laminaribiose and other laminarioligosaccharides. In Candida albicans (strain SC5314 / ATCC MYA-2876) (Yeast), this protein is Secreted beta-glucosidase SUN41.